The sequence spans 354 residues: Protein RecA (354 aa).

65–72 (GPESSGKT) contacts ATP.

It belongs to the RecA family.

Its subcellular location is the cytoplasm. In terms of biological role, can catalyze the hydrolysis of ATP in the presence of single-stranded DNA, the ATP-dependent uptake of single-stranded DNA by duplex DNA, and the ATP-dependent hybridization of homologous single-stranded DNAs. It interacts with LexA causing its activation and leading to its autocatalytic cleavage. The protein is Protein RecA of Pseudomonas savastanoi pv. phaseolicola (strain 1448A / Race 6) (Pseudomonas syringae pv. phaseolicola (strain 1448A / Race 6)).